The chain runs to 687 residues: Protein white (687 aa).

The disordered stretch occupies residues 1–30 (MGQEDQELLIRGGSKHPSAEHLNNGDSGAA). The Cytoplasmic portion of the chain corresponds to 1–419 (MGQEDQELLI…FMQFRAVLWR (419 aa)). The ABC transporter domain occupies 93 to 341 (NRTRGLFCNE…FSYVGAQCPT (249 aa)). 130-137 (GSSGAGKT) contacts ATP. Residues 420–440 (SWLSVLKEPLLVKVRLIQTTM) traverse the membrane as a helical segment. At 441-460 (VAILIGLIFLGQQLTQVGVM) the chain is on the extracellular side. The helical transmembrane segment at 461 to 481 (NINGAIFLFLTNMTFQNVFAT) threads the bilayer. Residues 482-497 (INVFTSELPVFMREAR) are Cytoplasmic-facing. The helical transmembrane segment at 498–518 (SRLYRCDTYFLGKTIAELPLF) threads the bilayer. Topologically, residues 519–531 (LTVPLVFTAIAYP) are extracellular. A helical membrane pass occupies residues 532–552 (MIGLRAGVLHFFNCLALVTLV). The Cytoplasmic segment spans residues 553 to 568 (ANVSTSFGYLISCASS). Residues 569–589 (STSMALSVGPPVIIPFLLFGG) form a helical membrane-spanning segment. Residues 590–644 (FFLNSGSVPVYLKWLSYLSWFRYANEGLLINQWADVEPGEISCTSSNTTCPSSGK) lie on the Extracellular side of the membrane. N-linked (GlcNAc...) asparagine glycosylation occurs at N636. Residues 645–665 (VILETLNFSAADLPLDYVGLA) traverse the membrane as a helical segment. The Cytoplasmic segment spans residues 666-675 (ILIVSFRVLA).

It belongs to the ABC transporter superfamily. ABCG family. Eye pigment precursor importer (TC 3.A.1.204) subfamily. May form a heterodimer with bw/brown. May form a heterodimer with st/scarlet. In terms of tissue distribution, expressed in the head (at protein level). Expressed in the eye, specifically in retina primary pigment cells, in the basement membrane of the base of secondary and tertiary pigment cells, and in retinula cells (at protein level). Expressed in the retina underlying lamina in the epithelial glia that surrounds the array of lamina cartridges (at protein level). Weakly expressed in photoreceptors, specifically in terminals of R1-R6, R7 and R8 (at protein level). Expressed at very low levels in medulla and central brain (at protein level). Expressed in principal cells of the Malpighian tubules.

The protein localises to the cytoplasmic vesicle membrane. It carries out the reaction 3',5'-cyclic GMP(in) + ATP + H2O = 3',5'-cyclic GMP(out) + ADP + phosphate + H(+). The enzyme catalyses guanine(out) + ATP + H2O = guanine(in) + ADP + phosphate + H(+). It catalyses the reaction riboflavin(in) + ATP + H2O = riboflavin(out) + ADP + phosphate + H(+). The catalysed reaction is (6S)-5,6,7,8-tetrahydrofolate(out) + ATP + H2O = (6S)-5,6,7,8-tetrahydrofolate(in) + ADP + phosphate + H(+). It carries out the reaction L-tryptophan(out) + ATP + H2O = L-tryptophan(in) + ADP + phosphate + H(+). The enzyme catalyses L-kynurenine(out) + ATP + H2O = L-kynurenine(in) + ADP + phosphate + H(+). It catalyses the reaction xanthine(out) + ATP + H2O = xanthine(in) + ADP + phosphate + H(+). ATP-dependent transporter of the ATP-binding cassette (ABC) family which transports various molecules including bioamines, neurotransmitters, metabolic intermediates and second messengers. In the eye, required for the transport of the eye red and brown pigment precursors, guanine and tryptophan, into pigment cell granules. Probably in association with bw/brown, involved in the transport of guanine. Probably in association with st/scarlet involved in the transport of kynurenine and probably tryptophan. Involved in the transport of kynurenine in pupal eyes. May play a role in histamine uptake by the lamina epithelial glia which surrounds photoreceptors R1-R6. In Malpighian tubules, involved in the transport of cGMP, guanine, xanthine, riboflavin, kynurenine and tryptophan. Probably in association with br/brown, involved in aging-induced intestinal stem cell proliferation in the midgut by regulating tetrahydrofolate transport. Probably in association with st/scarlet, plays a role in zinc storage granule biogenesis in Malpighian tubule principal epithelial cells. This Drosophila melanogaster (Fruit fly) protein is Protein white.